The sequence spans 353 residues: MSHILDKIDTVYPFPPKPIPLSEEEKSSYIASIKELLKQKDAVLIAHYYTDPEIQALAEETGGFVGDSLEMAKFGNRHPASTLIIAGVRFMGESAKILTPEKRILMPTLEAECSLDLGCPADKFSEFCDAHPDHTVVVYANTSAAVKARADWVVTSSIALEIVEHLDAEDKPIIWGPDRHLGSYIANKTGADMLLWQGECVVHDEFSADALRKMKSVYPDAAILVHPESPASVVELADAVGSTSQLIKAAKELPYQQMIVATDKGIFFKMQQLVPEKELIEAPTAGAGATCRSCAHCPWMAMNGLKAIEKALSEGGEEHEIFVDEALRVKSLIPLNRMLDFAEQLNMQVKGNA.

The iminosuccinate site is built by His-47 and Ser-68. Cys-113 contacts [4Fe-4S] cluster. Residues 139-141 (YAN) and Ser-156 each bind iminosuccinate. Cys-200 lines the [4Fe-4S] cluster pocket. Iminosuccinate-binding positions include 226–228 (HPE) and Thr-243. Cys-297 contacts [4Fe-4S] cluster.

It belongs to the quinolinate synthase family. Type 1 subfamily. The cofactor is [4Fe-4S] cluster.

The protein resides in the cytoplasm. The catalysed reaction is iminosuccinate + dihydroxyacetone phosphate = quinolinate + phosphate + 2 H2O + H(+). Its pathway is cofactor biosynthesis; NAD(+) biosynthesis; quinolinate from iminoaspartate: step 1/1. In terms of biological role, catalyzes the condensation of iminoaspartate with dihydroxyacetone phosphate to form quinolinate. The protein is Quinolinate synthase of Vibrio parahaemolyticus serotype O3:K6 (strain RIMD 2210633).